A 317-amino-acid chain; its full sequence is Universal stress protein Mb2019 (317 aa).

ATP is bound by residues Gly-13, 128-134, 142-143, Gly-175, Asp-208, 277-283, and 291-293; these read GYRGQGA, SV, GSHGRGG, and SVS.

Belongs to the universal stress protein A family.

This is Universal stress protein Mb2019 from Mycobacterium bovis (strain ATCC BAA-935 / AF2122/97).